The chain runs to 946 residues: Alanine--tRNA ligase, cytoplasmic (946 aa).

Zn(2+)-binding residues include His-591, His-595, Cys-710, and His-714.

The protein belongs to the class-II aminoacyl-tRNA synthetase family. In terms of assembly, monomer. It depends on Zn(2+) as a cofactor.

The protein resides in the cytoplasm. It carries out the reaction tRNA(Ala) + L-alanine + ATP = L-alanyl-tRNA(Ala) + AMP + diphosphate. Functionally, catalyzes the attachment of alanine to tRNA(Ala) in a two-step reaction: alanine is first activated by ATP to form Ala-AMP and then transferred to the acceptor end of tRNA(Ala). Also edits incorrectly charged tRNA(Ala) via its editing domain. This chain is Alanine--tRNA ligase, cytoplasmic (alaS), found in Dictyostelium discoideum (Social amoeba).